The following is a 286-amino-acid chain: Polyamine aminopropyltransferase (286 aa).

One can recognise a PABS domain in the interval 5-238 (KIWHEKLHRH…GTMMFSWGTD (234 aa)). 2 residues coordinate spermidine: His64 and Asp88. S-methyl-5'-thioadenosine is bound by residues Glu108 and 140–141 (NG). Catalysis depends on Asp158, which acts as the Proton acceptor. Residue 158–161 (DSTD) coordinates spermidine.

This sequence belongs to the spermidine/spermine synthase family. In terms of assembly, homodimer or homotetramer.

Its subcellular location is the cytoplasm. The catalysed reaction is S-adenosyl 3-(methylsulfanyl)propylamine + putrescine = S-methyl-5'-thioadenosine + spermidine + H(+). It participates in amine and polyamine biosynthesis; spermidine biosynthesis; spermidine from putrescine: step 1/1. Catalyzes the irreversible transfer of a propylamine group from the amino donor S-adenosylmethioninamine (decarboxy-AdoMet) to putrescine (1,4-diaminobutane) to yield spermidine. This is Polyamine aminopropyltransferase from Buchnera aphidicola subsp. Schizaphis graminum (strain Sg).